Reading from the N-terminus, the 160-residue chain is 2-C-methyl-D-erythritol 2,4-cyclodiphosphate synthase (160 aa).

Positions 11 and 13 each coordinate a divalent metal cation. 4-CDP-2-C-methyl-D-erythritol 2-phosphate is bound by residues 11 to 13 (DVH) and 37 to 38 (HS). A divalent metal cation is bound at residue His-45. Residues 59 to 61 (DIG), 64 to 68 (FPDTD), 103 to 109 (AQAPKMA), 135 to 138 (TTTE), Phe-142, and Arg-145 each bind 4-CDP-2-C-methyl-D-erythritol 2-phosphate.

Belongs to the IspF family. As to quaternary structure, homotrimer. The cofactor is a divalent metal cation.

It catalyses the reaction 4-CDP-2-C-methyl-D-erythritol 2-phosphate = 2-C-methyl-D-erythritol 2,4-cyclic diphosphate + CMP. Its pathway is isoprenoid biosynthesis; isopentenyl diphosphate biosynthesis via DXP pathway; isopentenyl diphosphate from 1-deoxy-D-xylulose 5-phosphate: step 4/6. In terms of biological role, involved in the biosynthesis of isopentenyl diphosphate (IPP) and dimethylallyl diphosphate (DMAPP), two major building blocks of isoprenoid compounds. Catalyzes the conversion of 4-diphosphocytidyl-2-C-methyl-D-erythritol 2-phosphate (CDP-ME2P) to 2-C-methyl-D-erythritol 2,4-cyclodiphosphate (ME-CPP) with a corresponding release of cytidine 5-monophosphate (CMP). The polypeptide is 2-C-methyl-D-erythritol 2,4-cyclodiphosphate synthase (Thioalkalivibrio sulfidiphilus (strain HL-EbGR7)).